We begin with the raw amino-acid sequence, 121 residues long: UPF0102 protein DehaBAV1_0707 (121 aa).

The protein belongs to the UPF0102 family.

The chain is UPF0102 protein DehaBAV1_0707 from Dehalococcoides mccartyi (strain ATCC BAA-2100 / JCM 16839 / KCTC 5957 / BAV1).